Consider the following 460-residue polypeptide: NADH-ubiquinone oxidoreductase chain 4 (460 aa).

Helical transmembrane passes span 20–42, 61–81, 93–113, 114–134, 148–168, 195–215, 225–245, 258–278, 285–304, 308–330, 351–371, and 394–414; these read PKWL…LMWF, PLST…ILAS, QRLY…AFGA, TEII…LIII, TYFL…LLLL, IWWA…GVHL, PVAG…YGMM, LAYP…SICL, SLIA…GILI, WGFS…LFCL, IIFP…LALP, and ILLT…MFLM.

This sequence belongs to the complex I subunit 4 family.

The protein resides in the mitochondrion membrane. The enzyme catalyses a ubiquinone + NADH + 5 H(+)(in) = a ubiquinol + NAD(+) + 4 H(+)(out). In terms of biological role, core subunit of the mitochondrial membrane respiratory chain NADH dehydrogenase (Complex I) that is believed to belong to the minimal assembly required for catalysis. Complex I functions in the transfer of electrons from NADH to the respiratory chain. The immediate electron acceptor for the enzyme is believed to be ubiquinone. This is NADH-ubiquinone oxidoreductase chain 4 (MT-ND4) from Carassius auratus (Goldfish).